Here is a 138-residue protein sequence, read N- to C-terminus: ATP synthase epsilon chain (138 aa).

This sequence belongs to the ATPase epsilon chain family. As to quaternary structure, F-type ATPases have 2 components, CF(1) - the catalytic core - and CF(0) - the membrane proton channel. CF(1) has five subunits: alpha(3), beta(3), gamma(1), delta(1), epsilon(1). CF(0) has three main subunits: a, b and c.

It is found in the cell inner membrane. In terms of biological role, produces ATP from ADP in the presence of a proton gradient across the membrane. This chain is ATP synthase epsilon chain, found in Psychrobacter cryohalolentis (strain ATCC BAA-1226 / DSM 17306 / VKM B-2378 / K5).